Reading from the N-terminus, the 552-residue chain is Glutamine--tRNA ligase (552 aa).

The short motif at 34–44 (PEPNGYLHIGH) is the 'HIGH' region element. Residues 35–37 (EPN) and 41–47 (HIGHAKS) contribute to the ATP site. 2 residues coordinate L-glutamine: Asp67 and Tyr212. ATP-binding positions include Thr231, 261–262 (RL), and 269–271 (MSK). The 'KMSKS' region motif lies at 268–272 (IMSKR).

The protein belongs to the class-I aminoacyl-tRNA synthetase family. In terms of assembly, monomer.

The protein localises to the cytoplasm. The catalysed reaction is tRNA(Gln) + L-glutamine + ATP = L-glutaminyl-tRNA(Gln) + AMP + diphosphate. The sequence is that of Glutamine--tRNA ligase from Pectobacterium atrosepticum (strain SCRI 1043 / ATCC BAA-672) (Erwinia carotovora subsp. atroseptica).